Consider the following 218-residue polypeptide: N-(5'-phosphoribosyl)anthranilate isomerase (218 aa).

Belongs to the TrpF family.

The enzyme catalyses N-(5-phospho-beta-D-ribosyl)anthranilate = 1-(2-carboxyphenylamino)-1-deoxy-D-ribulose 5-phosphate. Its pathway is amino-acid biosynthesis; L-tryptophan biosynthesis; L-tryptophan from chorismate: step 3/5. The polypeptide is N-(5'-phosphoribosyl)anthranilate isomerase (Halalkalibacterium halodurans (strain ATCC BAA-125 / DSM 18197 / FERM 7344 / JCM 9153 / C-125) (Bacillus halodurans)).